A 348-amino-acid chain; its full sequence is Probable dual-specificity RNA methyltransferase RlmN (348 aa).

E93 (proton acceptor) is an active-site residue. The Radical SAM core domain maps to T99 to D333. The cysteines at positions 106 and 338 are disulfide-linked. Residues C113, C117, and C120 each contribute to the [4Fe-4S] cluster site. Residues G160 to E161, S190, S219 to H221, and N295 each bind S-adenosyl-L-methionine. C338 functions as the S-methylcysteine intermediate in the catalytic mechanism.

The protein belongs to the radical SAM superfamily. RlmN family. Requires [4Fe-4S] cluster as cofactor.

The protein resides in the cytoplasm. The catalysed reaction is adenosine(2503) in 23S rRNA + 2 reduced [2Fe-2S]-[ferredoxin] + 2 S-adenosyl-L-methionine = 2-methyladenosine(2503) in 23S rRNA + 5'-deoxyadenosine + L-methionine + 2 oxidized [2Fe-2S]-[ferredoxin] + S-adenosyl-L-homocysteine. It carries out the reaction adenosine(37) in tRNA + 2 reduced [2Fe-2S]-[ferredoxin] + 2 S-adenosyl-L-methionine = 2-methyladenosine(37) in tRNA + 5'-deoxyadenosine + L-methionine + 2 oxidized [2Fe-2S]-[ferredoxin] + S-adenosyl-L-homocysteine. In terms of biological role, specifically methylates position 2 of adenine 2503 in 23S rRNA and position 2 of adenine 37 in tRNAs. The polypeptide is Probable dual-specificity RNA methyltransferase RlmN (Prochlorococcus marinus (strain MIT 9515)).